We begin with the raw amino-acid sequence, 418 residues long: Triacylglycerol lipase 2 (418 aa).

Residues 1–31 form the signal peptide; that stretch reads MAGSVMVPSVSIGLALSVLIFFALSLKTLEA. Asparagine 158 carries an N-linked (GlcNAc...) asparagine glycan. Serine 190 serves as the catalytic Nucleophile. 2 N-linked (GlcNAc...) asparagine glycosylation sites follow: asparagine 286 and asparagine 342. Active-site charge relay system residues include aspartate 360 and histidine 393.

It belongs to the AB hydrolase superfamily. Lipase family.

It is found in the secreted. It carries out the reaction a triacylglycerol + H2O = a diacylglycerol + a fatty acid + H(+). In terms of biological role, triacylglycerol (TAG) lipase. May be involved for TAG storage breakdown during seed germination. This Arabidopsis thaliana (Mouse-ear cress) protein is Triacylglycerol lipase 2 (LIP2).